Here is a 138-residue protein sequence, read N- to C-terminus: Acidic phospholipase A2 Drk-a1 (138 aa).

Residues 1-16 (MRTLWIVAVCLIGVEG) form the signal peptide. Intrachain disulfides connect C42–C131, C44–C60, C59–C111, C65–C138, C66–C104, C73–C97, and C91–C102. Residues Y43, G45, and G47 each contribute to the Ca(2+) site. Residue H63 is part of the active site. D64 lines the Ca(2+) pocket. D105 is a catalytic residue.

Belongs to the phospholipase A2 family. Group II subfamily. D49 sub-subfamily. Ca(2+) serves as cofactor. In terms of tissue distribution, expressed by the venom gland.

Its subcellular location is the secreted. The enzyme catalyses a 1,2-diacyl-sn-glycero-3-phosphocholine + H2O = a 1-acyl-sn-glycero-3-phosphocholine + a fatty acid + H(+). Functionally, snake venom phospholipase A2 (PLA2) that exhibits high hydrolytic activities and shows strong preference for the anionic micelles (dPPC with deoxycholate) to the zwitterionic micelles (dPPC with Triton X-100). PLA2 catalyzes the calcium-dependent hydrolysis of the 2-acyl groups in 3-sn-phosphoglycerides. The polypeptide is Acidic phospholipase A2 Drk-a1 (Daboia russelii (Russel's viper)).